The primary structure comprises 385 residues: Chaperone protein DnaJ 2 (385 aa).

A J domain is found at 10-75 (DYYKELGVSS…AKRKEYDETR (66 aa)). The segment at 155–233 (GVTVPLRMTS…CHGSGIQNRT (79 aa)) adopts a CR-type zinc-finger fold. Residues Cys-168, Cys-171, Cys-185, Cys-188, Cys-207, Cys-210, Cys-221, and Cys-224 each coordinate Zn(2+). CXXCXGXG motif repeat units lie at residues 168–175 (CTTCHGSG), 185–192 (CPICNGTG), 207–214 (CDGCRGTG), and 221–228 (CVDCHGSG).

The protein belongs to the DnaJ family. As to quaternary structure, homodimer. Requires Zn(2+) as cofactor.

The protein resides in the cytoplasm. Its function is as follows. Participates actively in the response to hyperosmotic and heat shock by preventing the aggregation of stress-denatured proteins and by disaggregating proteins, also in an autonomous, DnaK-independent fashion. Unfolded proteins bind initially to DnaJ; upon interaction with the DnaJ-bound protein, DnaK hydrolyzes its bound ATP, resulting in the formation of a stable complex. GrpE releases ADP from DnaK; ATP binding to DnaK triggers the release of the substrate protein, thus completing the reaction cycle. Several rounds of ATP-dependent interactions between DnaJ, DnaK and GrpE are required for fully efficient folding. Also involved, together with DnaK and GrpE, in the DNA replication of plasmids through activation of initiation proteins. In Nocardia farcinica (strain IFM 10152), this protein is Chaperone protein DnaJ 2.